Consider the following 78-residue polypeptide: Large ribosomal subunit protein bL28 (78 aa).

It belongs to the bacterial ribosomal protein bL28 family.

This chain is Large ribosomal subunit protein bL28, found in Aromatoleum aromaticum (strain DSM 19018 / LMG 30748 / EbN1) (Azoarcus sp. (strain EbN1)).